The chain runs to 23 residues: Dahlein-4.1 (23 aa).

Expressed by the skin dorsal glands.

It is found in the secreted. In terms of biological role, has no antimicrobial activity. This is Dahlein-4.1 from Ranoidea dahlii (Dahl's aquatic frog).